The sequence spans 98 residues: DNA-binding protein Fis (98 aa).

The H-T-H motif DNA-binding region spans 74–93 (QTRAATMMGINRGTLRKKLK).

The protein belongs to the transcriptional regulatory Fis family. In terms of assembly, homodimer.

In terms of biological role, activates ribosomal RNA transcription. Plays a direct role in upstream activation of rRNA promoters. The protein is DNA-binding protein Fis of Vibrio parahaemolyticus serotype O3:K6 (strain RIMD 2210633).